The sequence spans 313 residues: Cyclin-dependent kinase B2-1 (313 aa).

Residue Met-1 is modified to N-acetylmethionine. Positions 14–304 (FEKLEKVGEG…AKMAMEHPYF (291 aa)) constitute a Protein kinase domain. ATP contacts are provided by residues 20–28 (VGEGTYGKV) and Lys-43. Tyr-25 is subject to Phosphotyrosine. Asp-145 (proton acceptor) is an active-site residue. Thr-179 is subject to Phosphothreonine.

It belongs to the protein kinase superfamily. CMGC Ser/Thr protein kinase family. CDC2/CDKX subfamily. In terms of assembly, interacts with CYCD4-1 and CKS1. As to expression, expressed in root tips, shoot apical meristem, leaf primordia vascular tissues and tapetum of anthers.

The enzyme catalyses L-seryl-[protein] + ATP = O-phospho-L-seryl-[protein] + ADP + H(+). It carries out the reaction L-threonyl-[protein] + ATP = O-phospho-L-threonyl-[protein] + ADP + H(+). It catalyses the reaction [DNA-directed RNA polymerase] + ATP = phospho-[DNA-directed RNA polymerase] + ADP + H(+). The sequence is that of Cyclin-dependent kinase B2-1 (CDKB2-1) from Arabidopsis thaliana (Mouse-ear cress).